The primary structure comprises 424 residues: Serine--tRNA ligase (424 aa).

Position 230–232 (230–232) interacts with L-serine; that stretch reads TAE. An ATP-binding site is contributed by 261–263; sequence RSE. E284 contacts L-serine. ATP is bound at residue 348–351; it reads EISS. L-serine is bound at residue S384.

Belongs to the class-II aminoacyl-tRNA synthetase family. Type-1 seryl-tRNA synthetase subfamily. As to quaternary structure, homodimer. The tRNA molecule binds across the dimer.

The protein localises to the cytoplasm. It catalyses the reaction tRNA(Ser) + L-serine + ATP = L-seryl-tRNA(Ser) + AMP + diphosphate + H(+). The catalysed reaction is tRNA(Sec) + L-serine + ATP = L-seryl-tRNA(Sec) + AMP + diphosphate + H(+). The protein operates within aminoacyl-tRNA biosynthesis; selenocysteinyl-tRNA(Sec) biosynthesis; L-seryl-tRNA(Sec) from L-serine and tRNA(Sec): step 1/1. Catalyzes the attachment of serine to tRNA(Ser). Is also able to aminoacylate tRNA(Sec) with serine, to form the misacylated tRNA L-seryl-tRNA(Sec), which will be further converted into selenocysteinyl-tRNA(Sec). This is Serine--tRNA ligase from Streptococcus pneumoniae serotype 4 (strain ATCC BAA-334 / TIGR4).